Here is a 334-residue protein sequence, read N- to C-terminus: Ketol-acid reductoisomerase (NADP(+)) (334 aa).

Residues 1–181 (MTTVYYDQDV…GATRAGVIET (181 aa)) form the KARI N-terminal Rossmann domain. Residues 25-28 (YGSQ), arginine 48, serine 52, and 82-85 (DEIQ) contribute to the NADP(+) site. Residue histidine 107 is part of the active site. Residue glycine 133 participates in NADP(+) binding. In terms of domain architecture, KARI C-terminal knotted spans 182–327 (TFKEETETDL…RELREMMPFI (146 aa)). 4 residues coordinate Mg(2+): aspartate 190, glutamate 194, glutamate 226, and glutamate 230. Serine 251 is a binding site for substrate.

It belongs to the ketol-acid reductoisomerase family. Mg(2+) is required as a cofactor.

It carries out the reaction (2R)-2,3-dihydroxy-3-methylbutanoate + NADP(+) = (2S)-2-acetolactate + NADPH + H(+). The enzyme catalyses (2R,3R)-2,3-dihydroxy-3-methylpentanoate + NADP(+) = (S)-2-ethyl-2-hydroxy-3-oxobutanoate + NADPH + H(+). It participates in amino-acid biosynthesis; L-isoleucine biosynthesis; L-isoleucine from 2-oxobutanoate: step 2/4. The protein operates within amino-acid biosynthesis; L-valine biosynthesis; L-valine from pyruvate: step 2/4. Its function is as follows. Involved in the biosynthesis of branched-chain amino acids (BCAA). Catalyzes an alkyl-migration followed by a ketol-acid reduction of (S)-2-acetolactate (S2AL) to yield (R)-2,3-dihydroxy-isovalerate. In the isomerase reaction, S2AL is rearranged via a Mg-dependent methyl migration to produce 3-hydroxy-3-methyl-2-ketobutyrate (HMKB). In the reductase reaction, this 2-ketoacid undergoes a metal-dependent reduction by NADPH to yield (R)-2,3-dihydroxy-isovalerate. The chain is Ketol-acid reductoisomerase (NADP(+)) from Staphylococcus aureus (strain USA300).